A 151-amino-acid polypeptide reads, in one-letter code: UPF0756 membrane protein GWCH70_2680 (151 aa).

Transmembrane regions (helical) follow at residues 5-25 (ILFLLILFIIGFIAKNQSLMI), 53-73 (WGVTVITIAVLAPIATGEIGF), 86-106 (WIALLSGIFVALVAKGGVTLL), and 116-136 (LVFGTIIAVSLFHGVAVGPLI).

This sequence belongs to the UPF0756 family.

It is found in the cell membrane. The sequence is that of UPF0756 membrane protein GWCH70_2680 from Geobacillus sp. (strain WCH70).